The sequence spans 97 residues: uncharacterized protein (97 aa).

A run of 3 helical transmembrane segments spans residues 5–25, 49–71, and 75–92; these read INYL…FVGI, IAGY…SFQG, and LIPP…IYVN.

Its subcellular location is the cell membrane. This is an uncharacterized protein from Bacillus subtilis (strain 168).